We begin with the raw amino-acid sequence, 394 residues long: Elongation factor Tu (394 aa).

In terms of domain architecture, tr-type G spans 10-205 (KPHMNVGTIG…SMDNYFDLPE (196 aa)). The G1 stretch occupies residues 19 to 26 (GHVDHGKT). 19–26 (GHVDHGKT) contributes to the GTP binding site. Thr-26 is a Mg(2+) binding site. The segment at 61–65 (GITIN) is G2. The interval 82–85 (DCPG) is G3. GTP is bound by residues 82–86 (DCPGH) and 137–140 (NKLD). The G4 stretch occupies residues 137-140 (NKLD). The tract at residues 173 to 175 (SAF) is G5.

The protein belongs to the TRAFAC class translation factor GTPase superfamily. Classic translation factor GTPase family. EF-Tu/EF-1A subfamily. Monomer.

It localises to the cytoplasm. The enzyme catalyses GTP + H2O = GDP + phosphate + H(+). Its function is as follows. GTP hydrolase that promotes the GTP-dependent binding of aminoacyl-tRNA to the A-site of ribosomes during protein biosynthesis. The protein is Elongation factor Tu of Borreliella afzelii (strain PKo) (Borrelia afzelii).